We begin with the raw amino-acid sequence, 76 residues long: UPF0154 protein Exig_1099 (76 aa).

Residues 4 to 24 (WIWILIALLCLVAGVALGFYI) form a helical membrane-spanning segment. The segment at 54-76 (KPSQKKVNQVMRSMSGSMKSPKK) is disordered.

Belongs to the UPF0154 family.

The protein resides in the cell membrane. This Exiguobacterium sibiricum (strain DSM 17290 / CCUG 55495 / CIP 109462 / JCM 13490 / 255-15) protein is UPF0154 protein Exig_1099.